Consider the following 38-residue polypeptide: Phospholipase A2 1 (38 aa).

Ca(2+) is bound by residues tyrosine 28, glycine 30, and glycine 32.

The protein belongs to the phospholipase A2 family. Group I subfamily. It depends on Ca(2+) as a cofactor. Expressed by the venom gland.

Its subcellular location is the secreted. It catalyses the reaction a 1,2-diacyl-sn-glycero-3-phosphocholine + H2O = a 1-acyl-sn-glycero-3-phosphocholine + a fatty acid + H(+). Functionally, snake venom phospholipase A2 (PLA2) that inhibits neuromuscular transmission by blocking acetylcholine release from the nerve termini. PLA2 catalyzes the calcium-dependent hydrolysis of the 2-acyl groups in 3-sn-phosphoglycerides. This Calliophis bivirgatus (Blue Malaysian coral snake) protein is Phospholipase A2 1.